The following is a 462-amino-acid chain: BPI fold-containing family B member 2 (462 aa).

A signal peptide spans 1–22 (MARACSLGLLLLLLLLLRTVVT). Position 55 is a phosphothreonine (threonine 55). Serine 63 is subject to Phosphoserine. Asparagine 99 carries N-linked (GlcNAc...) asparagine glycosylation. A disulfide bridge connects residues cysteine 140 and cysteine 177. N-linked (GlcNAc...) asparagine glycans are attached at residues asparagine 297 and asparagine 336.

The protein belongs to the BPI/LBP/Plunc superfamily. BPI/LBP family.

The protein localises to the secreted. The chain is BPI fold-containing family B member 2 (Bpifb2) from Mus musculus (Mouse).